Here is a 168-residue protein sequence, read N- to C-terminus: Phosphopantetheine adenylyltransferase (168 aa).

Thr-14 contacts substrate. Residues 14 to 15 (TF) and His-22 contribute to the ATP site. 3 residues coordinate substrate: Lys-46, Leu-78, and Arg-92. Residues 93 to 95 (GLR), Glu-103, and 128 to 134 (YSFISSS) contribute to the ATP site.

It belongs to the bacterial CoaD family. As to quaternary structure, homohexamer. Mg(2+) is required as a cofactor.

The protein localises to the cytoplasm. The catalysed reaction is (R)-4'-phosphopantetheine + ATP + H(+) = 3'-dephospho-CoA + diphosphate. It participates in cofactor biosynthesis; coenzyme A biosynthesis; CoA from (R)-pantothenate: step 4/5. Reversibly transfers an adenylyl group from ATP to 4'-phosphopantetheine, yielding dephospho-CoA (dPCoA) and pyrophosphate. This chain is Phosphopantetheine adenylyltransferase, found in Xanthomonas euvesicatoria pv. vesicatoria (strain 85-10) (Xanthomonas campestris pv. vesicatoria).